A 512-amino-acid chain; its full sequence is Spastin homolog (512 aa).

Topologically, residues 1 to 274 (MFAFSKGPAG…FKGLRQPVKG (274 aa)) are cytoplasmic. The stretch at 32–97 (IEMDELTKHA…MKLEKSAQDR (66 aa)) forms a coiled coil. Positions 110–182 (KQSRSATVGP…SDTVHPEPPV (73 aa)) are disordered. Residues 115 to 233 (ATVGPSRPAS…ERLLDEVLDN (119 aa)) are MTBD. Residues 137 to 163 (APEKKNAAKAKENDENRHVCSRGDRCG) show a composition bias toward basic and acidic residues. The segment at residues 275–294 (ILLFGPPGNGKTLLAKAVAG) is an intramembrane region (helical). Position 279–286 (279–286 (GPPGNGKT)) interacts with ATP. The Cytoplasmic portion of the chain corresponds to 295-512 (ESKQMFFNIS…LSDFSRSFGC (218 aa)).

This sequence belongs to the AAA ATPase family. Spastin subfamily. Homohexamer. The homohexamer is stabilized by ATP-binding. The homohexamer may adopt a ring conformation through which microtubules pass prior to being severed. Interacts with microtubules. Interacts (via N-terminus) with tubulin; the interaction is direct.

It is found in the membrane. It localises to the cytoplasm. Its subcellular location is the cytoskeleton. The protein localises to the perinuclear region. The catalysed reaction is n ATP + n H2O + a microtubule = n ADP + n phosphate + (n+1) alpha/beta tubulin heterodimers.. ATP-dependent microtubule severing protein that specifically recognizes and cuts microtubules. Probably by regulating microtubule remodeling, plays a role in new synapse formation in GABAergic DD (Dorsal D type) neurons. The chain is Spastin homolog from Caenorhabditis elegans.